The chain runs to 164 residues: Putative pre-16S rRNA nuclease (164 aa).

It belongs to the YqgF nuclease family.

The protein resides in the cytoplasm. Its function is as follows. Could be a nuclease involved in processing of the 5'-end of pre-16S rRNA. This chain is Putative pre-16S rRNA nuclease, found in Rhizobium johnstonii (strain DSM 114642 / LMG 32736 / 3841) (Rhizobium leguminosarum bv. viciae).